Consider the following 138-residue polypeptide: Ribosome-binding factor A (138 aa).

Positions 1 to 20 are enriched in low complexity; that stretch reads MSSRPPSSSGPAGIPKGAPS. The interval 1–21 is disordered; that stretch reads MSSRPPSSSGPAGIPKGAPSQ.

This sequence belongs to the RbfA family. Monomer. Binds 30S ribosomal subunits, but not 50S ribosomal subunits or 70S ribosomes.

It is found in the cytoplasm. One of several proteins that assist in the late maturation steps of the functional core of the 30S ribosomal subunit. Associates with free 30S ribosomal subunits (but not with 30S subunits that are part of 70S ribosomes or polysomes). Required for efficient processing of 16S rRNA. May interact with the 5'-terminal helix region of 16S rRNA. The protein is Ribosome-binding factor A of Granulibacter bethesdensis (strain ATCC BAA-1260 / CGDNIH1).